Reading from the N-terminus, the 366-residue chain is Aminomethyltransferase (366 aa).

The protein belongs to the GcvT family. The glycine cleavage system is composed of four proteins: P, T, L and H.

The catalysed reaction is N(6)-[(R)-S(8)-aminomethyldihydrolipoyl]-L-lysyl-[protein] + (6S)-5,6,7,8-tetrahydrofolate = N(6)-[(R)-dihydrolipoyl]-L-lysyl-[protein] + (6R)-5,10-methylene-5,6,7,8-tetrahydrofolate + NH4(+). The glycine cleavage system catalyzes the degradation of glycine. The protein is Aminomethyltransferase of Bordetella avium (strain 197N).